The following is a 214-amino-acid chain: Putative AgrB-like protein (214 aa).

A run of 5 helical transmembrane segments spans residues 41–61 (IISVFIIGLLFNIALEALIFL), 82–102 (CTLLGIIISICIGFLVKSSFF), 109–129 (IIVFIGIVIFVFGYFIVFKFA), 154–174 (ILTIYLFIEILSIILYYNLGW), and 182–202 (LSIILGVAWQCITLTYIGNIL).

It belongs to the AgrB family.

It is found in the cell membrane. Functionally, may be involved in the proteolytic processing of a quorum sensing system signal molecule precursor. This Clostridium perfringens (strain SM101 / Type A) protein is Putative AgrB-like protein.